Here is a 205-residue protein sequence, read N- to C-terminus: Adenylyl-sulfate kinase (205 aa).

Residue 31–38 (GLSGAGKS) coordinates ATP. The Phosphoserine intermediate role is filled by serine 105.

It belongs to the APS kinase family.

It catalyses the reaction adenosine 5'-phosphosulfate + ATP = 3'-phosphoadenylyl sulfate + ADP + H(+). Its pathway is sulfur metabolism; hydrogen sulfide biosynthesis; sulfite from sulfate: step 2/3. Its function is as follows. Catalyzes the synthesis of activated sulfate. The chain is Adenylyl-sulfate kinase from Shewanella sp. (strain MR-7).